We begin with the raw amino-acid sequence, 314 residues long: 4-hydroxy-3-methylbut-2-enyl diphosphate reductase (314 aa).

Position 12 (cysteine 12) interacts with [4Fe-4S] cluster. Residues histidine 41 and histidine 74 each coordinate (2E)-4-hydroxy-3-methylbut-2-enyl diphosphate. Residues histidine 41 and histidine 74 each coordinate dimethylallyl diphosphate. Residues histidine 41 and histidine 74 each coordinate isopentenyl diphosphate. Cysteine 96 lines the [4Fe-4S] cluster pocket. Histidine 124 contributes to the (2E)-4-hydroxy-3-methylbut-2-enyl diphosphate binding site. Residue histidine 124 participates in dimethylallyl diphosphate binding. Residue histidine 124 participates in isopentenyl diphosphate binding. The active-site Proton donor is the glutamate 126. Threonine 167 is a (2E)-4-hydroxy-3-methylbut-2-enyl diphosphate binding site. [4Fe-4S] cluster is bound at residue cysteine 197. The (2E)-4-hydroxy-3-methylbut-2-enyl diphosphate site is built by serine 225, serine 226, asparagine 227, and serine 269. The dimethylallyl diphosphate site is built by serine 225, serine 226, asparagine 227, and serine 269. Isopentenyl diphosphate contacts are provided by serine 225, serine 226, asparagine 227, and serine 269.

This sequence belongs to the IspH family. [4Fe-4S] cluster is required as a cofactor.

The enzyme catalyses isopentenyl diphosphate + 2 oxidized [2Fe-2S]-[ferredoxin] + H2O = (2E)-4-hydroxy-3-methylbut-2-enyl diphosphate + 2 reduced [2Fe-2S]-[ferredoxin] + 2 H(+). The catalysed reaction is dimethylallyl diphosphate + 2 oxidized [2Fe-2S]-[ferredoxin] + H2O = (2E)-4-hydroxy-3-methylbut-2-enyl diphosphate + 2 reduced [2Fe-2S]-[ferredoxin] + 2 H(+). It participates in isoprenoid biosynthesis; dimethylallyl diphosphate biosynthesis; dimethylallyl diphosphate from (2E)-4-hydroxy-3-methylbutenyl diphosphate: step 1/1. The protein operates within isoprenoid biosynthesis; isopentenyl diphosphate biosynthesis via DXP pathway; isopentenyl diphosphate from 1-deoxy-D-xylulose 5-phosphate: step 6/6. Its function is as follows. Catalyzes the conversion of 1-hydroxy-2-methyl-2-(E)-butenyl 4-diphosphate (HMBPP) into a mixture of isopentenyl diphosphate (IPP) and dimethylallyl diphosphate (DMAPP). Acts in the terminal step of the DOXP/MEP pathway for isoprenoid precursor biosynthesis. This is 4-hydroxy-3-methylbut-2-enyl diphosphate reductase from Pseudoalteromonas atlantica (strain T6c / ATCC BAA-1087).